A 217-amino-acid chain; its full sequence is Probable GTP-binding protein EngB (217 aa).

The EngB-type G domain maps to 29–213 (GPSEVAFAGR…RQAIAQTVGI (185 aa)). Residues 37-44 (GRSNVGKS), 64-68 (GRTQE), 91-94 (DMPG), 158-161 (TKTD), and 192-194 (TSS) each bind GTP. Mg(2+) contacts are provided by Ser44 and Thr66.

This sequence belongs to the TRAFAC class TrmE-Era-EngA-EngB-Septin-like GTPase superfamily. EngB GTPase family. It depends on Mg(2+) as a cofactor.

In terms of biological role, necessary for normal cell division and for the maintenance of normal septation. The chain is Probable GTP-binding protein EngB from Rhizobium etli (strain CIAT 652).